The following is a 238-amino-acid chain: 7-cyano-7-deazaguanine synthase (238 aa).

ATP is bound at residue 14-24 (FSGGQDSATCL). Zn(2+) is bound by residues C202, C217, C220, and C223.

Belongs to the QueC family. It depends on Zn(2+) as a cofactor.

The enzyme catalyses 7-carboxy-7-deazaguanine + NH4(+) + ATP = 7-cyano-7-deazaguanine + ADP + phosphate + H2O + H(+). Its pathway is purine metabolism; 7-cyano-7-deazaguanine biosynthesis. Functionally, catalyzes the ATP-dependent conversion of 7-carboxy-7-deazaguanine (CDG) to 7-cyano-7-deazaguanine (preQ(0)). This Nitrobacter hamburgensis (strain DSM 10229 / NCIMB 13809 / X14) protein is 7-cyano-7-deazaguanine synthase.